The primary structure comprises 180 residues: UPF0340 protein LL0489 (180 aa).

The protein belongs to the UPF0340 family.

The sequence is that of UPF0340 protein LL0489 (yeiF) from Lactococcus lactis subsp. lactis (strain IL1403) (Streptococcus lactis).